The primary structure comprises 543 residues: CTP synthase (543 aa).

Positions 1 to 267 (MKQTKYIFVT…LNPIAEILDL (267 aa)) are amidoligase domain. Ser-15 serves as a coordination point for CTP. Residue Ser-15 participates in UTP binding. Residues 16-21 (SLGKGI) and Asp-73 contribute to the ATP site. Mg(2+)-binding residues include Asp-73 and Glu-141. CTP is bound by residues 148–150 (DIE), 188–193 (KTKPTQ), and Lys-224. Residues 188–193 (KTKPTQ) and Lys-224 each bind UTP. In terms of domain architecture, Glutamine amidotransferase type-1 spans 292–543 (KIAFVGKYVD…IKAAINYEDN (252 aa)). Position 354 (Gly-354) interacts with L-glutamine. The Nucleophile; for glutamine hydrolysis role is filled by Cys-381. L-glutamine is bound by residues 382–385 (LGMQ), Glu-405, and Arg-473. Residues His-516 and Glu-518 contribute to the active site.

Belongs to the CTP synthase family. Homotetramer.

It catalyses the reaction UTP + L-glutamine + ATP + H2O = CTP + L-glutamate + ADP + phosphate + 2 H(+). The enzyme catalyses L-glutamine + H2O = L-glutamate + NH4(+). The catalysed reaction is UTP + NH4(+) + ATP = CTP + ADP + phosphate + 2 H(+). Its pathway is pyrimidine metabolism; CTP biosynthesis via de novo pathway; CTP from UDP: step 2/2. Its activity is regulated as follows. Allosterically activated by GTP, when glutamine is the substrate; GTP has no effect on the reaction when ammonia is the substrate. The allosteric effector GTP functions by stabilizing the protein conformation that binds the tetrahedral intermediate(s) formed during glutamine hydrolysis. Inhibited by the product CTP, via allosteric rather than competitive inhibition. Its function is as follows. Catalyzes the ATP-dependent amination of UTP to CTP with either L-glutamine or ammonia as the source of nitrogen. Regulates intracellular CTP levels through interactions with the four ribonucleotide triphosphates. The sequence is that of CTP synthase from Campylobacter jejuni subsp. doylei (strain ATCC BAA-1458 / RM4099 / 269.97).